We begin with the raw amino-acid sequence, 390 residues long: 1-deoxy-D-xylulose 5-phosphate reductoisomerase (390 aa).

The NADPH site is built by threonine 10, glycine 11, serine 12, isoleucine 13, alanine 36, lysine 37, asparagine 38, and asparagine 122. Residue lysine 123 participates in 1-deoxy-D-xylulose 5-phosphate binding. Glutamate 124 is a binding site for NADPH. Aspartate 148 lines the Mn(2+) pocket. Residues serine 149, glutamate 150, serine 174, and histidine 197 each coordinate 1-deoxy-D-xylulose 5-phosphate. Glutamate 150 provides a ligand contact to Mn(2+). NADPH is bound at residue glycine 203. The 1-deoxy-D-xylulose 5-phosphate site is built by serine 210, asparagine 215, lysine 216, and glutamate 219. Residue glutamate 219 coordinates Mn(2+).

It belongs to the DXR family. It depends on Mg(2+) as a cofactor. The cofactor is Mn(2+).

It carries out the reaction 2-C-methyl-D-erythritol 4-phosphate + NADP(+) = 1-deoxy-D-xylulose 5-phosphate + NADPH + H(+). It participates in isoprenoid biosynthesis; isopentenyl diphosphate biosynthesis via DXP pathway; isopentenyl diphosphate from 1-deoxy-D-xylulose 5-phosphate: step 1/6. Its function is as follows. Catalyzes the NADPH-dependent rearrangement and reduction of 1-deoxy-D-xylulose-5-phosphate (DXP) to 2-C-methyl-D-erythritol 4-phosphate (MEP). The sequence is that of 1-deoxy-D-xylulose 5-phosphate reductoisomerase from Trichlorobacter lovleyi (strain ATCC BAA-1151 / DSM 17278 / SZ) (Geobacter lovleyi).